A 133-amino-acid polypeptide reads, in one-letter code: MAAFNLALYLSKSIPGVGVLGGVIGGSAALAKNLKAKQRGEITTEEAVIDTGKEALGAGLATTVSAYAAGVVGGGLVVSLGTAFAVAVAGKYAWDYGMEQMEAKLQEKKHQEQGGQTYGDNPDPFDPQELETP.

The Cytoplasmic segment spans residues 1 to 5; it reads MAAFN. The chain crosses the membrane as a helical span at residues 6–26; the sequence is LALYLSKSIPGVGVLGGVIGG. The Lumenal portion of the chain corresponds to 27–67; the sequence is SAALAKNLKAKQRGEITTEEAVIDTGKEALGAGLATTVSAY. The tract at residues 37 to 57 is magnetite interacting component (MIC) binds magnetite; sequence KQRGEITTEEAVIDTGKEALG. The chain crosses the membrane as a helical span at residues 68–88; sequence AAGVVGGGLVVSLGTAFAVAV. The Cytoplasmic portion of the chain corresponds to 89–133; it reads AGKYAWDYGMEQMEAKLQEKKHQEQGGQTYGDNPDPFDPQELETP. The tract at residues 105–133 is disordered; sequence LQEKKHQEQGGQTYGDNPDPFDPQELETP.

This sequence belongs to the magnetosome MamC family. In terms of assembly, probably interacts with MamA.

The protein localises to the magnetosome membrane. In terms of biological role, probably helps control the size of magnetite crystals; in vitro synthesis of magnetite yields larger and more well-developed magnetite crystals in the presence of purified MamC. Binds Fe(3+). The lumenal domain probably binds magnetite crystals, affecting crystal size and shape. Purified MamC self-assembles into micelles in the presence of ferric chloride hexahydrate (FeCl(3).6H(2)O); both oxygen and iron are present in the proteinaceous micelles. Whether this is relevant in vivo is unknown. The protein is Magnetosome protein MamC of Magnetococcus marinus (strain ATCC BAA-1437 / JCM 17883 / MC-1).